We begin with the raw amino-acid sequence, 619 residues long: Dihydroxy-acid dehydratase (619 aa).

D81 serves as a coordination point for Mg(2+). [2Fe-2S] cluster is bound at residue C122. The Mg(2+) site is built by D123 and K124. The residue at position 124 (K124) is an N6-carboxylysine. Residue C201 participates in [2Fe-2S] cluster binding. Mg(2+) is bound at residue E496. Residue S522 is the Proton acceptor of the active site.

The protein belongs to the IlvD/Edd family. In terms of assembly, homodimer. The cofactor is [2Fe-2S] cluster. It depends on Mg(2+) as a cofactor.

It carries out the reaction (2R)-2,3-dihydroxy-3-methylbutanoate = 3-methyl-2-oxobutanoate + H2O. The enzyme catalyses (2R,3R)-2,3-dihydroxy-3-methylpentanoate = (S)-3-methyl-2-oxopentanoate + H2O. It functions in the pathway amino-acid biosynthesis; L-isoleucine biosynthesis; L-isoleucine from 2-oxobutanoate: step 3/4. The protein operates within amino-acid biosynthesis; L-valine biosynthesis; L-valine from pyruvate: step 3/4. Functionally, functions in the biosynthesis of branched-chain amino acids. Catalyzes the dehydration of (2R,3R)-2,3-dihydroxy-3-methylpentanoate (2,3-dihydroxy-3-methylvalerate) into 2-oxo-3-methylpentanoate (2-oxo-3-methylvalerate) and of (2R)-2,3-dihydroxy-3-methylbutanoate (2,3-dihydroxyisovalerate) into 2-oxo-3-methylbutanoate (2-oxoisovalerate), the penultimate precursor to L-isoleucine and L-valine, respectively. The sequence is that of Dihydroxy-acid dehydratase from Burkholderia vietnamiensis (strain G4 / LMG 22486) (Burkholderia cepacia (strain R1808)).